A 166-amino-acid polypeptide reads, in one-letter code: Cyanate hydratase (166 aa).

Catalysis depends on residues Arg106, Glu109, and Ser132.

Belongs to the cyanase family.

The enzyme catalyses cyanate + hydrogencarbonate + 3 H(+) = NH4(+) + 2 CO2. Its function is as follows. Catalyzes the reaction of cyanate with bicarbonate to produce ammonia and carbon dioxide. In Verticillium alfalfae (strain VaMs.102 / ATCC MYA-4576 / FGSC 10136) (Verticillium wilt of alfalfa), this protein is Cyanate hydratase.